The primary structure comprises 375 residues: Aminomethyltransferase (375 aa).

It belongs to the GcvT family. In terms of assembly, the glycine cleavage system is composed of four proteins: P, T, L and H.

It catalyses the reaction N(6)-[(R)-S(8)-aminomethyldihydrolipoyl]-L-lysyl-[protein] + (6S)-5,6,7,8-tetrahydrofolate = N(6)-[(R)-dihydrolipoyl]-L-lysyl-[protein] + (6R)-5,10-methylene-5,6,7,8-tetrahydrofolate + NH4(+). The glycine cleavage system catalyzes the degradation of glycine. The chain is Aminomethyltransferase from Ralstonia nicotianae (strain ATCC BAA-1114 / GMI1000) (Ralstonia solanacearum).